A 251-amino-acid chain; its full sequence is MKILLSNDDGVHALGIKVLFDELVKHFSVNVVAPDRNCSGASNSLTLLNPLRAEHLDNGFISVNGTPTDSVHLGSSQLFTDCDLVVAGINKGANLGDDTLYSGTVAAATEGRHMGMPAVAVSLAGNNEQHYQTAAIVTAKIIKRLRTHPLPADQILNINVPDIPLAELKGIKVTRLGHRHQAERMQKMQDPWQRDIYWYGVLGQELDGGEGTDFHAIANGYASVTPLTVDMTAHRSIENIKSWLTALNLSD.

A divalent metal cation-binding residues include D8, D9, S39, and N90.

The protein belongs to the SurE nucleotidase family. A divalent metal cation serves as cofactor.

The protein localises to the cytoplasm. It catalyses the reaction a ribonucleoside 5'-phosphate + H2O = a ribonucleoside + phosphate. In terms of biological role, nucleotidase that shows phosphatase activity on nucleoside 5'-monophosphates. This Colwellia psychrerythraea (strain 34H / ATCC BAA-681) (Vibrio psychroerythus) protein is 5'-nucleotidase SurE.